The sequence spans 237 residues: Carboxy-S-adenosyl-L-methionine synthase (237 aa).

S-adenosyl-L-methionine-binding positions include Tyr-40, 65-67 (GCS), 116-117 (DI), Asn-131, and Arg-194.

It belongs to the class I-like SAM-binding methyltransferase superfamily. Cx-SAM synthase family. As to quaternary structure, homodimer.

The enzyme catalyses prephenate + S-adenosyl-L-methionine = carboxy-S-adenosyl-L-methionine + 3-phenylpyruvate + H2O. Its function is as follows. Catalyzes the conversion of S-adenosyl-L-methionine (SAM) to carboxy-S-adenosyl-L-methionine (Cx-SAM). The protein is Carboxy-S-adenosyl-L-methionine synthase of Dichelobacter nodosus (strain VCS1703A).